The following is a 308-amino-acid chain: Baculoviral IAP repeat-containing protein bir-2 (308 aa).

BIR repeat units follow at residues arginine 27–methionine 98 and arginine 170–lysine 241. Positions 68, 71, 87, 94, 211, 214, 230, and 237 each coordinate Zn(2+).

This sequence belongs to the IAP family.

In Caenorhabditis elegans, this protein is Baculoviral IAP repeat-containing protein bir-2.